The chain runs to 606 residues: Large subunit GTPase 1 homolog (606 aa).

The disordered stretch occupies residues 1-21 (MGKKNKGGAPNLGRQLIKDRF). The CP-type G domain maps to 165 to 395 (WRQLWRVVER…LCDCPGLVMP (231 aa)). Residue 213–216 (NKSD) participates in GTP binding. Residues serine 276 and serine 279 each carry the phosphoserine modification. GTP-binding positions include 344–351 (GYPNVGKS) and 388–391 (DCPG). The disordered stretch occupies residues 574-606 (LVAGNDPAAKPWRHVKKERREKLRKKFSHLDEH). Basic residues predominate over residues 584–600 (PWRHVKKERREKLRKKF).

Belongs to the TRAFAC class YlqF/YawG GTPase family. LSG1 subfamily. In terms of tissue distribution, expressed in larval serotonergic neurons.

The protein localises to the cytoplasm. Functionally, GTPase required for the nuclear export of the 60S ribosomal subunit. Probably acts by mediating the release of Nmd3 from the 60S ribosomal subunit after export into the cytoplasm. Regulator of body size; acts in serotonergic neurons to regulate insulin signaling and thus exerts global growth control. This Drosophila melanogaster (Fruit fly) protein is Large subunit GTPase 1 homolog (Ns3).